Here is an 84-residue protein sequence, read N- to C-terminus: Small ribosomal subunit protein uS17 (84 aa).

It belongs to the universal ribosomal protein uS17 family. As to quaternary structure, part of the 30S ribosomal subunit.

Its function is as follows. One of the primary rRNA binding proteins, it binds specifically to the 5'-end of 16S ribosomal RNA. The chain is Small ribosomal subunit protein uS17 from Proteus mirabilis (strain HI4320).